Here is a 229-residue protein sequence, read N- to C-terminus: Small ribosomal subunit protein uS3 (229 aa).

The 69-residue stretch at 39 to 107 (IRKFLKKELY…EVFINIKEEK (69 aa)) folds into the KH type-2 domain.

Belongs to the universal ribosomal protein uS3 family. In terms of assembly, part of the 30S ribosomal subunit. Forms a tight complex with proteins S10 and S14.

Binds the lower part of the 30S subunit head. Binds mRNA in the 70S ribosome, positioning it for translation. The polypeptide is Small ribosomal subunit protein uS3 (Nitratiruptor sp. (strain SB155-2)).